The following is a 356-amino-acid chain: tRNA-splicing endonuclease subunit SEN2 (356 aa).

Active-site residues include tyrosine 268, histidine 276, and lysine 307.

The protein belongs to the tRNA-intron endonuclease family. As to quaternary structure, heterotetramer composed of SEN2, SEN15, SEN34 and SEN54. Interacts directly with SEN54.

The catalysed reaction is pretRNA = a 3'-half-tRNA molecule with a 5'-OH end + a 5'-half-tRNA molecule with a 2',3'-cyclic phosphate end + an intron with a 2',3'-cyclic phosphate and a 5'-hydroxyl terminus.. Functionally, constitutes one of the two catalytic subunit of the tRNA-splicing endonuclease complex, a complex responsible for identification and cleavage of the splice sites in pre-tRNA. It cleaves pre-tRNA at the 5'- and 3'-splice sites to release the intron. The products are an intron and two tRNA half-molecules bearing 2',3'-cyclic phosphate and 5'-OH termini. There are no conserved sequences at the splice sites, but the intron is invariably located at the same site in the gene, placing the splice sites an invariant distance from the constant structural features of the tRNA body. This subunit may anchor the endonuclease complex to the nuclear membrane. Probably carries the active site for 5'-splice site cleavage. The polypeptide is tRNA-splicing endonuclease subunit SEN2 (SEN2) (Eremothecium gossypii (strain ATCC 10895 / CBS 109.51 / FGSC 9923 / NRRL Y-1056) (Yeast)).